The following is a 410-amino-acid chain: MTSRPQIHVHDAKEANKQTATKLTLPAVFTAPIRTDIVHKVFTDLNKNRKQASGVKISTRGTAGMGHSAESWGTGRAVARIPRVGGSGTHRSGQAAFGNQCRKGRMFAPLKTYRRVHRRVNVNQKRHAVAAALAASALVPLVFARGHRISNVQELPYVFDDSVESYEKTKQAVAFLKRVGAYDDVLRVAETKALRAGQGKLRNRRYKLRRGPLVVYGNEKSTLTRALRNIPGVDVCNVNRLNLLQLAPGGHVGRFIIWTESAFKKLNEIFGTYSTTGVQKSGYQLQRPLLANADIARIINSNEVQSVVKVAGTTETHERKKNPLTNNNALFKLNPAAKIVKEQAKKAAEASKAKRQATLKANRKAAKTHKKGSQAWIAAFNKANEEAIAKARQEDADFIAQGQEIKEGDE.

This sequence belongs to the universal ribosomal protein uL4 family.

The protein resides in the cytoplasm. This chain is Large ribosomal subunit protein uL4 (RPL4), found in Tetrahymena thermophila (strain SB210).